Consider the following 1179-residue polypeptide: Tubulin glycylase 3B (1179 aa).

The segment covering 177–199 has biased composition (polar residues); sequence NKGQTNNSNRENGGNFHSEQSPK. Disordered stretches follow at residues 177–208, 250–278, 592–625, and 853–890; these read NKGQ…VVSG, QQPQ…LPLS, KVLS…AVQQ, and QKQH…LKQD. A compositionally biased stretch (basic and acidic residues) spans 592–601; it reads KVLSNTKSKD. Polar residues-rich tracts occupy residues 614–625 and 881–890; these read KSKSNNQNAVQQ and AQSSTSLKQD. One can recognise a TTL domain in the interval 790–1152; it reads FIDFYETVDF…SMAKKGTKKN (363 aa). ATP-binding positions include 965-968, Lys-978, and Asp-980; that span reads QKYI.

It is found in the cell projection. The protein localises to the cilium. It localises to the cytoplasm. Its subcellular location is the cytoskeleton. The protein resides in the cilium axoneme. Polyglycylase which modifies tubulin, generating side chains of glycine on the gamma-carboxyl groups of specific glutamate residues within the C-terminal tail of tubulin. Polyglycylates tubulin, with a preference for alpha-tubulin toward beta-tubulin. In Tetrahymena thermophila (strain SB210), this protein is Tubulin glycylase 3B (TTLL3B).